We begin with the raw amino-acid sequence, 213 residues long: ATP synthase peripheral stalk subunit OSCP, mitochondrial (213 aa).

Residues 1–23 (MAALAVSGLSQQVRCFSTSVVRP) constitute a mitochondrion transit peptide. The short motif at 5 to 23 (AVSGLSQQVRCFSTSVVRP) is the SIFI-degron element. An N6-acetyllysine mark is found at K54, K60, K70, and K73. An N6-succinyllysine modification is found at K90. Residues K100, K158, and K162 each carry the N6-acetyllysine; alternate modification. An N6-succinyllysine; alternate mark is found at K100, K158, and K162. N6-acetyllysine occurs at positions 172, 176, and 192. The residue at position 199 (K199) is an N6-succinyllysine.

The protein belongs to the ATPase delta chain family. In terms of assembly, component of the ATP synthase complex composed at least of ATP5F1A/subunit alpha, ATP5F1B/subunit beta, ATP5MC1/subunit c (homooctomer), MT-ATP6/subunit a, MT-ATP8/subunit 8, ATP5ME/subunit e, ATP5MF/subunit f, ATP5MG/subunit g, ATP5MK/subunit k, ATP5MJ/subunit j, ATP5F1C/subunit gamma, ATP5F1D/subunit delta, ATP5F1E/subunit epsilon, ATP5PF/subunit F6, ATP5PB/subunit b, ATP5PD/subunit d, ATP5PO/subunit OSCP. ATP synthase complex consists of a soluble F(1) head domain (subunits alpha(3) and beta(3)) - the catalytic core - and a membrane F(0) domain - the membrane proton channel (subunits c, a, 8, e, f, g, k and j). These two domains are linked by a central stalk (subunits gamma, delta, and epsilon) rotating inside the F1 region and a stationary peripheral stalk (subunits F6, b, d, and OSCP). In terms of processing, acetylation at Lys-162 decreases ATP production. Deacetylated by SIRT3. Post-translationally, in response to mitochondrial stress, the precursor protein is ubiquitinated by the SIFI complex in the cytoplasm before mitochondrial import, leading to its degradation. Within the SIFI complex, UBR4 initiates ubiquitin chain that are further elongated or branched by KCMF1.

It is found in the mitochondrion. It localises to the mitochondrion inner membrane. Subunit OSCP, of the mitochondrial membrane ATP synthase complex (F(1)F(0) ATP synthase or Complex V) that produces ATP from ADP in the presence of a proton gradient across the membrane which is generated by electron transport complexes of the respiratory chain. ATP synthase complex consist of a soluble F(1) head domain - the catalytic core - and a membrane F(1) domain - the membrane proton channel. These two domains are linked by a central stalk rotating inside the F(1) region and a stationary peripheral stalk. During catalysis, ATP synthesis in the catalytic domain of F(1) is coupled via a rotary mechanism of the central stalk subunits to proton translocation. In vivo, can only synthesize ATP although its ATP hydrolase activity can be activated artificially in vitro. Part of the complex F(0) domain. Part of the complex F(0) domain and the peripheric stalk, which acts as a stator to hold the catalytic alpha(3)beta(3) subcomplex and subunit a/ATP6 static relative to the rotary elements. In Bos taurus (Bovine), this protein is ATP synthase peripheral stalk subunit OSCP, mitochondrial.